The chain runs to 229 residues: Protein ras-2 (229 aa).

15–22 (GDGGVGKT) provides a ligand contact to GTP. The short motif at 37–45 (YDPTIEDSY) is the Effector region element. Residue 62–66 (DTAGQ) coordinates GTP. The segment at 109-132 (KESTSSPSAYPGSSPLAATNPSAP) is disordered. Residues 111 to 126 (STSSPSAYPGSSPLAA) show a composition bias toward low complexity. 140-143 (NKSD) serves as a coordination point for GTP. The tract at residues 188–229 (LRKQRQQGQSTPRALPPSGNSKSEKYSGTEKPKRPRGKCLII) is disordered. Residues 209–219 (KSEKYSGTEKP) show a composition bias toward basic and acidic residues. A compositionally biased stretch (basic residues) spans 220–229 (KRPRGKCLII). At Cys226 the chain carries Cysteine methyl ester. Cys226 carries the S-farnesyl cysteine lipid modification. Positions 227–229 (LII) are cleaved as a propeptide — removed in mature form.

It belongs to the small GTPase superfamily. Ras family.

It localises to the cell membrane. It carries out the reaction GTP + H2O = GDP + phosphate + H(+). Functionally, ras proteins bind GDP/GTP and possess intrinsic GTPase activity. The protein is Protein ras-2 (ras-2) of Neurospora crassa (strain ATCC 24698 / 74-OR23-1A / CBS 708.71 / DSM 1257 / FGSC 987).